The sequence spans 115 residues: MANYRSTIRHRNSGSRKSVSGDTHEVTRVRTPQKDRNEVLATVLNLLGSKRVTLQCMDGVVRMGRIPGSKKKRMWIREGDIVIANPWEIQDSKADVTWKYTRPQVEWLERKGYLN.

Residues 1-34 form a disordered region; that stretch reads MANYRSTIRHRNSGSRKSVSGDTHEVTRVRTPQK. A compositionally biased stretch (basic and acidic residues) spans 22–34; that stretch reads DTHEVTRVRTPQK. Residues 27–101 form the S1-like domain; sequence TRVRTPQKDR…SKADVTWKYT (75 aa).

It belongs to the eIF-1A family.

Functionally, seems to be required for maximal rate of protein biosynthesis. Enhances ribosome dissociation into subunits and stabilizes the binding of the initiator Met-tRNA(I) to 40 S ribosomal subunits. The sequence is that of Translation initiation factor 1A 2 from Methanosarcina barkeri (strain Fusaro / DSM 804).